Consider the following 198-residue polypeptide: MMGHGDIDQLITMLARLPGLGPRSARRAALALLRQPESRMLPLAHLMERAATRVKTCSLCGNLDTVDPCHICTDAGRDRGLICVVETVGDLWALERAGVHRGVYQVLGGTLSALAGLGPDDLNVRPLFERIEEGGVREVILALSATVEGATTAHWLQERLLPTGVTVTRVGHGVPMGGALDVLDDGTLAAALTARRSL.

The C4-type zinc finger occupies C57–C72. The Toprim domain occupies G80–P175.

The protein belongs to the RecR family.

In terms of biological role, may play a role in DNA repair. It seems to be involved in an RecBC-independent recombinational process of DNA repair. It may act with RecF and RecO. The chain is Recombination protein RecR from Gluconobacter oxydans (strain 621H) (Gluconobacter suboxydans).